Reading from the N-terminus, the 213-residue chain is Orotate phosphoribosyltransferase (213 aa).

Residue lysine 26 coordinates 5-phospho-alpha-D-ribose 1-diphosphate. An orotate-binding site is contributed by 34 to 35 (FF). 5-phospho-alpha-D-ribose 1-diphosphate contacts are provided by residues 72 to 73 (YK), arginine 99, lysine 100, lysine 103, histidine 105, and 124 to 132 (DDVITAGTA). Residues threonine 128 and arginine 156 each contribute to the orotate site.

The protein belongs to the purine/pyrimidine phosphoribosyltransferase family. PyrE subfamily. In terms of assembly, homodimer. Mg(2+) serves as cofactor.

It carries out the reaction orotidine 5'-phosphate + diphosphate = orotate + 5-phospho-alpha-D-ribose 1-diphosphate. It functions in the pathway pyrimidine metabolism; UMP biosynthesis via de novo pathway; UMP from orotate: step 1/2. Functionally, catalyzes the transfer of a ribosyl phosphate group from 5-phosphoribose 1-diphosphate to orotate, leading to the formation of orotidine monophosphate (OMP). The polypeptide is Orotate phosphoribosyltransferase (Vibrio cholerae serotype O1 (strain ATCC 39315 / El Tor Inaba N16961)).